The chain runs to 265 residues: Membrane steroid-binding protein 2 (265 aa).

The chain crosses the membrane as a helical span at residues 63–85 (WAAARSASPVAVIAAVAGAAVVY). The segment at 94 to 116 (PPPPPARPREEPSEEAPPPPEPV) is disordered. A Cytochrome b5 heme-binding domain is found at 118 to 217 (VGEITAEELL…SKYVKVGTIK (100 aa)). The segment at 120 to 217 (EITAEELLQY…SKYVKVGTIK (98 aa)) is steroid-binding.

It belongs to the cytochrome b5 family. MAPR subfamily.

The protein localises to the cell membrane. In terms of biological role, binds multiple steroid compounds. This is Membrane steroid-binding protein 2 from Oryza sativa subsp. japonica (Rice).